The following is a 75-amino-acid chain: MYB-like transcription factor ETC3 (75 aa).

Residues 1-20 (MDNHRRTKQPKTNSIVTSSS) form a disordered region. Positions 34-71 (SQEEEDLVSRMHKLVGDRWELIAGRIPGRTAGEIERFW) constitute a Myb-like domain.

Expressed in leaf epidermal cells, stomate guard cells in leaves, cotyledons and hypocotyls, inflorescences, developing seeds and siliques.

It is found in the nucleus. In terms of biological role, MYB-type transcription factor involved in epidermal cell fate specification. Acts as a negative regulator of trichome development, including endoreplication, by mediating lateral inhibition. Promotes the formation of hair developing cells in H position in root epidermis, probably by inhibiting non-hair cell formation. May have pleiotropic effects on flowering development and epidermal cell size through the regulation of endoreduplication. The chain is MYB-like transcription factor ETC3 (ETC3) from Arabidopsis thaliana (Mouse-ear cress).